The following is a 149-amino-acid chain: Nucleoside diphosphate kinase (149 aa).

Positions 9, 57, 85, 91, 102, and 112 each coordinate ATP. The active-site Pros-phosphohistidine intermediate is H115.

The protein belongs to the NDK family. In terms of assembly, homotetramer. Mg(2+) is required as a cofactor.

It is found in the cytoplasm. The catalysed reaction is dZDP + ATP = dZTP + ADP. It carries out the reaction a 2'-deoxyribonucleoside 5'-diphosphate + ATP = a 2'-deoxyribonucleoside 5'-triphosphate + ADP. The enzyme catalyses a ribonucleoside 5'-diphosphate + ATP = a ribonucleoside 5'-triphosphate + ADP. It functions in the pathway purine metabolism. Its function is as follows. Major role in the synthesis of nucleoside triphosphates other than ATP. The ATP gamma phosphate is transferred to the NDP beta phosphate via a ping-pong mechanism, using a phosphorylated active-site intermediate. Functionally, (Microbial infection) Catalyzes the phosphorylation of dZDP to dZTP, when the bacterium is infected by a phage that produces the substrate for the synthesis of dZTP (2- amino-2'-deoxyadenosine 5'-triphosphate), which is then used by the phage as a DNA polymerase substrate. The sequence is that of Nucleoside diphosphate kinase from Picosynechococcus sp. (strain ATCC 27264 / PCC 7002 / PR-6) (Agmenellum quadruplicatum).